The chain runs to 332 residues: Glycerol-3-phosphate dehydrogenase [NAD(P)+] (332 aa).

Residues Ser-10, Trp-11, Lys-31, and Lys-105 each contribute to the NADPH site. The sn-glycerol 3-phosphate site is built by Lys-105, Gly-136, and Ser-138. Residue Ala-140 coordinates NADPH. The sn-glycerol 3-phosphate site is built by Lys-191, Asp-244, Ser-254, Arg-255, and Asn-256. The active-site Proton acceptor is Lys-191. Position 255 (Arg-255) interacts with NADPH. NADPH contacts are provided by Val-279 and Glu-281.

The protein belongs to the NAD-dependent glycerol-3-phosphate dehydrogenase family.

The protein resides in the cytoplasm. The enzyme catalyses sn-glycerol 3-phosphate + NAD(+) = dihydroxyacetone phosphate + NADH + H(+). The catalysed reaction is sn-glycerol 3-phosphate + NADP(+) = dihydroxyacetone phosphate + NADPH + H(+). It participates in membrane lipid metabolism; glycerophospholipid metabolism. Catalyzes the reduction of the glycolytic intermediate dihydroxyacetone phosphate (DHAP) to sn-glycerol 3-phosphate (G3P), the key precursor for phospholipid synthesis. The chain is Glycerol-3-phosphate dehydrogenase [NAD(P)+] from Anaeromyxobacter sp. (strain K).